Reading from the N-terminus, the 552-residue chain is Carboxypeptidase Y homolog A (552 aa).

Residues 1-18 (MRIATSTLLVGAASAAFA) form the signal peptide. Positions 19-133 (PQDGTQRVLN…KLDNYNLRAR (115 aa)) are excised as a propeptide. Disulfide bonds link C187/C427, C321/C335, C345/C368, C352/C361, and C390/C397. N218 carries N-linked (GlcNAc...) asparagine glycosylation. S274 is a catalytic residue. The active site involves D466. N-linked (GlcNAc...) asparagine glycosylation occurs at N516. The active site involves H527.

The protein belongs to the peptidase S10 family.

The protein localises to the vacuole. It catalyses the reaction Release of a C-terminal amino acid with broad specificity.. Its function is as follows. Vacuolar carboxypeptidase involved in degradation of small peptides. Digests preferentially peptides containing an aliphatic or hydrophobic residue in P1' position, as well as methionine, leucine or phenylalanine in P1 position of ester substrate. The chain is Carboxypeptidase Y homolog A (CPYA) from Pyricularia oryzae (strain 70-15 / ATCC MYA-4617 / FGSC 8958) (Rice blast fungus).